Consider the following 438-residue polypeptide: Enolase (438 aa).

Substrate is bound by residues His-159 and Glu-168. Glu-211 acts as the Proton donor in catalysis. Mg(2+) is bound by residues Asp-246, Glu-297, and Asp-322. Substrate is bound by residues Glu-297 and Asp-322. Lys-347 functions as the Proton acceptor in the catalytic mechanism. Residues Ser-374–Ser-377 and Lys-398 each bind substrate.

Belongs to the enolase family. In terms of assembly, homodimer. Requires Mg(2+) as cofactor.

The protein resides in the cytoplasm. It catalyses the reaction (2R)-2-phosphoglycerate = phosphoenolpyruvate + H2O. Its pathway is carbohydrate degradation; glycolysis; pyruvate from D-glyceraldehyde 3-phosphate: step 4/5. This chain is Enolase (enoA), found in Penicillium chrysogenum (Penicillium notatum).